Reading from the N-terminus, the 529-residue chain is MTLSPYLQEVAKRRTFAIISHPDAGKTTITEKVLLFGQAIQTAGTVKGRGSSQHAKSDWMEMEKQRGISITTSVMQFPYHDCLVNLLDTPGHEDFSEDTYRTLTAVDCCLMVIDAAKGVEDRTRKLMEVTRLRDTPILTFMNKLDRDIRDPMELLDEVENELKIGCAPITWPIGCGKLFKGVYHLYKDETYLYQTGKGHTIQEVRIVKGLNNPDLDAAVGEDLAQQLRDELELVQGASNEFDKDLFLAGEITPVFFGTALGNFGVDHMLDGLVEWAPAPMPRQTDTRTVEASEEKFSGFVFKIQANMDPKHRDRVAFMRVVSGKYEKGMKLRQVRTGKDVVISDALTFMAGDRSHVEEAYPGDILGLHNHGTIQIGDTFTQGEMMKFTGIPNFAPELFRRIRLKDPLKQKQLLKGLVQLSEEGAVQVFRPISNNDLIVGAVGVLQFDVVVARLKSEYNVEAIYESVNVATARWVESTDAKKFEEFKRKNETQLALDGGDNLTYIAPTMVNLNLTQERYPDVQFRKTREH.

The tr-type G domain maps to 11 to 280 (AKRRTFAIIS…GLVEWAPAPM (270 aa)). GTP contacts are provided by residues 20-27 (SHPDAGKT), 88-92 (DTPGH), and 142-145 (NKLD).

Belongs to the TRAFAC class translation factor GTPase superfamily. Classic translation factor GTPase family. PrfC subfamily.

The protein localises to the cytoplasm. Its function is as follows. Increases the formation of ribosomal termination complexes and stimulates activities of RF-1 and RF-2. It binds guanine nucleotides and has strong preference for UGA stop codons. It may interact directly with the ribosome. The stimulation of RF-1 and RF-2 is significantly reduced by GTP and GDP, but not by GMP. In Salmonella arizonae (strain ATCC BAA-731 / CDC346-86 / RSK2980), this protein is Peptide chain release factor 3.